The following is a 131-amino-acid chain: Small ribosomal subunit protein uS8 (131 aa).

Belongs to the universal ribosomal protein uS8 family. As to quaternary structure, part of the 30S ribosomal subunit. Contacts proteins S5 and S12.

Its function is as follows. One of the primary rRNA binding proteins, it binds directly to 16S rRNA central domain where it helps coordinate assembly of the platform of the 30S subunit. The polypeptide is Small ribosomal subunit protein uS8 (Verminephrobacter eiseniae (strain EF01-2)).